The following is a 594-amino-acid chain: Frizzled and smoothened-like protein A (594 aa).

Positions 1-22 (MVDIRKSLFFIIFFIFYNYVNS) are cleaved as a signal peptide. Residues 23-248 (QKAINSDAFC…NEWYQFKDLT (226 aa)) are Extracellular-facing. Residues 27 to 173 (NSDAFCQKKT…SNYDLQCLNI (147 aa)) form the FZ domain. Cystine bridges form between Cys-32–Cys-98 and Cys-41–Cys-91. Asn-55 and Asn-106 each carry an N-linked (GlcNAc...) asparagine glycan. The cysteines at positions 117 and 170 are disulfide-linked. Asn-182, Asn-189, Asn-195, and Asn-206 each carry an N-linked (GlcNAc...) asparagine glycan. Residues 249 to 269 (TVTGVISFVCIFFNIFIYGFL) form a helical membrane-spanning segment. The Cytoplasmic portion of the chain corresponds to 270–277 (NKKHDRHT). The helical transmembrane segment at 278-298 (IGILCLSFSLWCCMLSDLIVA) threads the bilayer. The Extracellular segment spans residues 299–329 (SSPDYSLVCPEPGRFARIHDSRCVANGIIFQ). Residues 330–350 (WGAVCTTMFWSAMAIDLYLVI) traverse the membrane as a helical segment. Residues 351–361 (KKLSLPAFTVK) lie on the Cytoplasmic side of the membrane. The chain crosses the membrane as a helical span at residues 362-382 (YFVAAIFTLALLFTTVPLAWD). Residues 383–403 (DYGYGFGGVGCWIMSNSVQNG) are Extracellular-facing. The helical transmembrane segment at 404–424 (CFWIPMLICLLIGAVSICLII) threads the bilayer. Residues 425–448 (YEIVKVFKNVGRSGISIILANARL) are Cytoplasmic-facing. A helical transmembrane segment spans residues 449-469 (FGIVSFIFIEYIYLFVYHFWV). Residues 470–507 (QENTEKFTQNITDWVICVQTTGSSDGCPLPKAVPYATQ) are Extracellular-facing. N-linked (GlcNAc...) asparagine glycosylation occurs at Asn-479. The chain crosses the membrane as a helical span at residues 508 to 528 (FIFLFFLRLLGIEVCIFYGIN). The Cytoplasmic segment spans residues 529–594 (SRSKNIILES…SKNGGDDDDL (66 aa)).

Belongs to the G-protein coupled receptor Fz/Smo family.

The protein resides in the membrane. The polypeptide is Frizzled and smoothened-like protein A (fslA) (Dictyostelium discoideum (Social amoeba)).